A 916-amino-acid chain; its full sequence is Transmembrane channel-like protein 2-A (916 aa).

Positions 1 to 13 (MPKKSDTTRKLED) are enriched in basic and acidic residues. Residues 1–159 (MPKKSDTTRK…DEEDESMSEG (159 aa)) form a disordered region. Residues 1 to 271 (MPKKSDTTRK…IFLRWMYGMN (271 aa)) lie on the Cytoplasmic side of the membrane. The span at 14–26 (VGIEIDGDVDSAE) shows a compositional bias: acidic residues. Composition is skewed to basic residues over residues 31–45 (SKGKGGKKAAGGKRG) and 62–72 (KGRRAANKKKP). The segment covering 97–107 (NVRERGDGDKK) has biased composition (basic and acidic residues). Residues 108-117 (KSGKKGRRGG) are compositionally biased toward basic residues. Residues 118-138 (KKNEKGKGKDSDKDSDKDEKK) are compositionally biased toward basic and acidic residues. The segment covering 145–157 (DESDSDEEDESMS) has biased composition (acidic residues). Residues 272 to 292 (LVLFSLTFGLVVIPEVLMGLP) form a helical membrane-spanning segment. Residues 293-344 (YGSIPRKTVPREDQDTAMDYSVLTDFNGYCKYSVLFYGYYNNQRTIGFLKFR) lie on the Extracellular side of the membrane. The helical transmembrane segment at 345 to 365 (LPLSYLMVGIGTFGYSLMVVI) threads the bilayer. Topologically, residues 366 to 438 (RTMAKNADVG…ENIHLRRFLR (73 aa)) are cytoplasmic. A helical transmembrane segment spans residues 439 to 459 (VLANFLITCTLGGSGYLIYFV). At 460-478 (VKRSQEFQNMDNLSWYEKN) the chain is on the extracellular side. A helical membrane pass occupies residues 479 to 499 (ELEIIMSLLGLVGPMLFETIA). Over 500–516 (ELEEYHPRIALKWQLGR) the chain is Cytoplasmic. The helical transmembrane segment at 517 to 537 (IFALFLGNLYTFLLALFDEVN) threads the bilayer. The Extracellular segment spans residues 538-649 (AKLEEEESIK…EFDISGNVLG (112 aa)). Residues 650-670 (LVFNQGMIWMGAFYAPGLVGI) traverse the membrane as a helical segment. At 671 to 704 (NVLRLLSSMYYQCWAVMACNVPHERVFKASKSNN) the chain is on the cytoplasmic side. The chain crosses the membrane as a helical span at residues 705–725 (FYMGLLLLILFLSLLPVVYTI). The Extracellular segment spans residues 726–762 (MSLPPSFDCGPFSGKERMFDVVMETIDLDLPAFMGTL). A helical transmembrane segment spans residues 763–783 (FGYVANPGLVISAVLLMVLAI). Topologically, residues 784–916 (YYLNSVSEAY…RGQGPPPRRQ (133 aa)) are cytoplasmic. Basic and acidic residues predominate over residues 804–818 (MQMARDEEKNRRNNK). A disordered region spans residues 804 to 916 (MQMARDEEKN…RGQGPPPRRQ (113 aa)). Over residues 883-892 (ARGPVTRAPG) the composition is skewed to low complexity.

It belongs to the TMC family. In terms of assembly, interacts (via N-terminus) with both isoforms CD1 and CD3 of PCDH15A (via cytoplasmic domain); this interaction is required for mechanotransduction of the hair cells and correct localization of PCDH15A in hair bundles of the hair cells. In terms of tissue distribution, in adults, expression is restricted to the hair cells of inner ear and lateral line organ. Expressed at higher levels in the larval inner ear than in the lateral-line neuromasts.

The protein resides in the cell membrane. The enzyme catalyses Ca(2+)(in) = Ca(2+)(out). In terms of biological role, pore-forming subunit of the mechanotransducer (MET) non-selective cation channel complex located at tips of hair-cell stereocilia. Highly permeable to calcium and likely transports monovalent cations. The chain is Transmembrane channel-like protein 2-A from Danio rerio (Zebrafish).